The following is a 122-amino-acid chain: Fluoride-specific ion channel FluC (122 aa).

4 consecutive transmembrane segments (helical) span residues 6 to 26 (LVVG…INLV), 33 to 53 (SISL…GLLF), 60 to 80 (GLSP…FTTF), and 101 to 121 (LNII…FIIF). Residues glycine 75 and threonine 78 each contribute to the Na(+) site.

This sequence belongs to the fluoride channel Fluc/FEX (TC 1.A.43) family.

It is found in the cell inner membrane. The catalysed reaction is fluoride(in) = fluoride(out). Na(+) is not transported, but it plays an essential structural role and its presence is essential for fluoride channel function. Functionally, fluoride-specific ion channel. Important for reducing fluoride concentration in the cell, thus reducing its toxicity. This chain is Fluoride-specific ion channel FluC, found in Campylobacter jejuni subsp. jejuni serotype O:6 (strain 81116 / NCTC 11828).